Consider the following 701-residue polypeptide: DC-STAMP domain-containing protein 2 (701 aa).

The next 4 membrane-spanning stretches (helical) occupy residues 15 to 35 (TCGFTVGLSLATAFGLLELLG), 40 to 60 (PFGCLVTTVTLAAFLSLGMGF), 82 to 102 (LLLLVASFGLVLQGPCANTLQ), and 215 to 235 (FPHLCYALLPYKLLVCGLASL). N-linked (GlcNAc...) asparagine glycosylation is found at N272 and N284. 2 consecutive transmembrane segments (helical) span residues 310-330 (ALSLMGYTMPLLIGFLYIQAL) and 404-424 (LLIMLLLVFLDYGVFWLLDLA). Residue N468 is glycosylated (N-linked (GlcNAc...) asparagine). The chain crosses the membrane as a helical span at residues 488 to 508 (YIVIGTMYGLCFFVTLFGSYV). Residues 673–701 (LQEALGTNLSDKSTSKPERAGNRNQDRKQ) form a disordered region. A compositionally biased stretch (basic and acidic residues) spans 685-701 (STSKPERAGNRNQDRKQ).

In terms of assembly, interacts with DCST1. As to expression, expressed in testis.

It localises to the cytoplasmic vesicle. The protein resides in the secretory vesicle. The protein localises to the acrosome membrane. Its function is as follows. Essential sperm cell-surface protein required for sperm-egg fusion and fertilization. This chain is DC-STAMP domain-containing protein 2, found in Mus musculus (Mouse).